Reading from the N-terminus, the 330-residue chain is L-asparaginase (330 aa).

Residues 4-330 (PQVTILATGG…EAIQKIFSTY (327 aa)) form the Asparaginase/glutaminase domain. Thr14 functions as the O-isoaspartyl threonine intermediate in the catalytic mechanism. Substrate is bound at residue 93–94 (TD).

This sequence belongs to the asparaginase 1 family. As to quaternary structure, homotetramer.

The protein resides in the cytoplasm. The enzyme catalyses L-asparagine + H2O = L-aspartate + NH4(+). This chain is L-asparaginase (ansA), found in Wolinella succinogenes (strain ATCC 29543 / DSM 1740 / CCUG 13145 / JCM 31913 / LMG 7466 / NCTC 11488 / FDC 602W) (Vibrio succinogenes).